The following is a 4644-amino-acid chain: Cytoplasmic dynein 1 heavy chain 1 (4644 aa).

Ser2 carries the N-acetylserine modification. Residues 2-1865 (SEPGGGEDGS…SIQMANAKFN (1864 aa)) are stem. Coiled coils occupy residues 48-69 (AALE…FLSD), 179-200 (SVEK…NIEI), 453-476 (AHRK…QLRA), and 541-564 (TEAW…RITA). A Phosphoserine modification is found at Ser68. The tract at residues 446 to 701 (MVWRINPAHR…NTQEIFDDWA (256 aa)) is interaction with DYNC1I2. The interaction with DYNC1LI2 stretch occupies residues 649–800 (AKQIDRQLTA…EKVEERNTIS (152 aa)). Residue Lys1123 is modified to N6-acetyllysine. A coiled-coil region spans residues 1169-1201 (TYVQSLKRKIKQFEKQVELYRNGQRLLEKQRFQ). At Ser1228 the chain carries Phosphoserine. Coiled coils occupy residues 1229–1250 (AIQQ…AVES) and 1355–1371 (RKLR…LKNF). AAA stretches follow at residues 1866-2097 (YGFE…VLVS), 2178-2450 (EELK…LTRL), 2554-2803 (EVET…WVRG), and 2897-3166 (VFYE…GGRT). ATP is bound by residues 1904–1911 (GPAGTGKT) and 2222–2229 (GPSGSGKS). The tract at residues 2388-2408 (GEDEAQRRRKGKEDEGEEAAS) is disordered. ATP contacts are provided by residues 2593–2600 (GPPGSGKT) and 2935–2942 (GVSGAGKT). 3 coiled-coil regions span residues 3187–3273 (EKRS…ADKQ), 3394–3498 (AIAQ…KNQM), and 3735–3798 (EFQL…VSQQ). Residues 3187-3498 (EKRSELEEQQ…KTSETFKNQM (312 aa)) are stalk. The residue at position 3478 (Lys3478) is an N6-acetyllysine. AAA regions lie at residues 3551–3780 (LSNA…EVTR) and 4003–4219 (AHMF…TVDT). The residue at position 4160 (Ser4160) is a Phosphoserine. Position 4281 is an N6-acetyllysine (Lys4281). Thr4364 is subject to Phosphothreonine. Ser4366 carries the phosphoserine modification.

Belongs to the dynein heavy chain family. As to quaternary structure, homodimer. The cytoplasmic dynein 1 complex consists of two catalytic heavy chains (HCs) and a number of non-catalytic subunits presented by intermediate chains (ICs), light intermediate chains (LICs) and light chains (LCs); the composition seems to vary in respect to the IC, LIC and LC composition. The heavy chain homodimer serves as a scaffold for the probable homodimeric assembly of the respective non-catalytic subunits. The ICs and LICs bind directly to the HC dimer and dynein LCs assemble on the IC dimer. Interacts with DYNC1LI1; DYNC1LI1 and DYNC1LI2 bind mutually exclusive to DYNC1H1. Interacts with DYNC1LI2; DYNC1LI1 and DYNC1LI2 bind mutually exclusive to DYNC1H1. Interacts with DYNC1I2. Interacts with BICD2. Interacts with DNALI1.

It is found in the cytoplasm. The protein resides in the cytoskeleton. Functionally, cytoplasmic dynein 1 acts as a motor for the intracellular retrograde motility of vesicles and organelles along microtubules. Dynein has ATPase activity; the force-producing power stroke is thought to occur on release of ADP. Plays a role in mitotic spindle assembly and metaphase plate congression. The sequence is that of Cytoplasmic dynein 1 heavy chain 1 (Dync1h1) from Mus musculus (Mouse).